A 64-amino-acid polypeptide reads, in one-letter code: MKLTCVMIVAVLVLTVCKVVTSDQLKKLRRECYLEPGDSCFHDDGRGACCEGTCLFGINCVASW.

The signal sequence occupies residues 1–22 (MKLTCVMIVAVLVLTVCKVVTS). 3 disulfides stabilise this stretch: Cys32-Cys50, Cys40-Cys54, and Cys49-Cys60.

As to expression, expressed by the venom duct.

The protein resides in the secreted. Its function is as follows. Probable neurotoxin. The chain is Conotoxin Cal6.26 from Californiconus californicus (California cone).